A 301-amino-acid chain; its full sequence is UDP-N-acetylenolpyruvoylglucosamine reductase (301 aa).

In terms of domain architecture, FAD-binding PCMH-type spans R24–G190. The active site involves R169. The Proton donor role is filled by S220. Residue E290 is part of the active site.

It belongs to the MurB family. The cofactor is FAD.

Its subcellular location is the cytoplasm. It catalyses the reaction UDP-N-acetyl-alpha-D-muramate + NADP(+) = UDP-N-acetyl-3-O-(1-carboxyvinyl)-alpha-D-glucosamine + NADPH + H(+). It functions in the pathway cell wall biogenesis; peptidoglycan biosynthesis. Its function is as follows. Cell wall formation. In Synechococcus sp. (strain ATCC 27144 / PCC 6301 / SAUG 1402/1) (Anacystis nidulans), this protein is UDP-N-acetylenolpyruvoylglucosamine reductase.